The sequence spans 1484 residues: Ral GTPase-activating protein subunit beta (1484 aa).

Disordered regions lie at residues 355–437 (PRSD…APRR) and 699–728 (ENNL…PDSE). Ser359 carries the post-translational modification Phosphoserine. Thr363 and Thr379 each carry phosphothreonine. Polar residues-rich tracts occupy residues 369 to 381 (SMPQ…TTPP), 392 to 428 (NKAT…TSSE), and 701 to 725 (NLKS…PTTP). Residues Ser421 and Ser710 each carry the phosphoserine modification. Thr724 carries the phosphothreonine modification. The region spanning 1138–1382 (IGYLDLLPCR…TTLEKEVPVI (245 aa)) is the Rap-GAP domain. A Phosphoserine modification is found at Ser1275. The tract at residues 1297–1325 (PNHTDSLNSSQRLSPSSRMKKLPQGRPVP) is disordered. The segment covering 1302–1313 (SLNSSQRLSPSS) has biased composition (low complexity).

As to quaternary structure, component of the heterodimeric RalGAP1 complex with RALGAPA1 and of the heterodimeric RalGAP2 complex with RALGAPA2. Heterodimerization is required for activity. In terms of tissue distribution, abundantly expressed in testis, pancreas, lung, thymus, brown fat, and white fat. Expressed at lower levels in the brain.

Functionally, non-catalytic subunit of the heterodimeric RalGAP1 and RalGAP2 complexes which act as GTPase activators for the Ras-like small GTPases RALA and RALB. The protein is Ral GTPase-activating protein subunit beta (Ralgapb) of Mus musculus (Mouse).